A 510-amino-acid chain; its full sequence is Leucine-rich repeat-containing protein 14B (510 aa).

One copy of the LRR 1; degenerate repeat lies at 100-137 (SNRLRVADFTGIQDVQVQQCPCGRALGRWGRTKVLART). The LRR 2; degenerate repeat unit spans residues 181 to 205 (QVCCPSLRADSLSPGQLLQVLGLAG). One copy of the LRR 4; degenerate repeat lies at 234–273 (FPQLTSLTLPTKAFDAPPTCAPDPEGEDLLLTSIAWELSQ). LRR repeat units lie at residues 274–298 (MNQL…LSPL), 299–330 (KTPL…AHLE), 331–349 (VLDL…TFFR), 355–382 (AQTL…GLSP), and 383–407 (CSQL…LFAA).

The protein belongs to the PRAME family. LRRC14 subfamily.

This is Leucine-rich repeat-containing protein 14B from Mus musculus (Mouse).